We begin with the raw amino-acid sequence, 291 residues long: Protease HtpX (291 aa).

The next 2 helical transmembrane spans lie at I4–C24 and I37–I57. A Zn(2+)-binding site is contributed by H139. E140 is a catalytic residue. A Zn(2+)-binding site is contributed by H143. The next 2 helical transmembrane spans lie at G147–S167 and I195–F215. Residue E220 coordinates Zn(2+).

This sequence belongs to the peptidase M48B family. Zn(2+) serves as cofactor.

Its subcellular location is the cell membrane. This Baumannia cicadellinicola subsp. Homalodisca coagulata protein is Protease HtpX.